The following is a 376-amino-acid chain: Putative phosphoserine aminotransferase (376 aa).

The disordered stretch occupies residues 1-30 (MADQLTPSLDIPAALKPRDGRFGSGPSKVR). An L-glutamate-binding site is contributed by Arg-50. Pyridoxal 5'-phosphate-binding positions include 84–85 (AT), Phe-108, Thr-154, Asp-176, and Gln-199. Lys-200 bears the N6-(pyridoxal phosphate)lysine mark. 251 to 252 (NT) contributes to the pyridoxal 5'-phosphate binding site.

Belongs to the class-V pyridoxal-phosphate-dependent aminotransferase family. SerC subfamily. As to quaternary structure, homodimer. Requires pyridoxal 5'-phosphate as cofactor.

It is found in the cytoplasm. The enzyme catalyses O-phospho-L-serine + 2-oxoglutarate = 3-phosphooxypyruvate + L-glutamate. It catalyses the reaction 4-(phosphooxy)-L-threonine + 2-oxoglutarate = (R)-3-hydroxy-2-oxo-4-phosphooxybutanoate + L-glutamate. It participates in amino-acid biosynthesis; L-serine biosynthesis; L-serine from 3-phospho-D-glycerate: step 2/3. Its pathway is cofactor biosynthesis; pyridoxine 5'-phosphate biosynthesis; pyridoxine 5'-phosphate from D-erythrose 4-phosphate: step 3/5. In terms of biological role, catalyzes the reversible conversion of 3-phosphohydroxypyruvate to phosphoserine and of 3-hydroxy-2-oxo-4-phosphonooxybutanoate to phosphohydroxythreonine. The chain is Putative phosphoserine aminotransferase from Mycobacterium leprae (strain TN).